A 67-amino-acid polypeptide reads, in one-letter code: Conotoxin LeDr192 (67 aa).

An N-terminal signal peptide occupies residues 1 to 19 (MRCFPVFIILLLLIASAPC). A propeptide spanning residues 20–49 (FDARTKTDDDVPLSPLRDNLKRTIRTRLNI) is cleaved from the precursor. A Threonine amide modification is found at threonine 65.

Belongs to the conotoxin T superfamily. Post-translationally, contains 2 disulfide bonds that can be either 'C1-C3, C2-C4' or 'C1-C4, C2-C3', since these disulfide connectivities have been observed for conotoxins with cysteine framework V (for examples, see AC P0DQQ7 and AC P81755). In terms of tissue distribution, expressed by the venom duct.

It is found in the secreted. The sequence is that of Conotoxin LeDr192 from Conus litteratus (Lettered cone).